A 2287-amino-acid polypeptide reads, in one-letter code: Protein Ycf2 (2287 aa).

1632 to 1639 (GSIGTGRS) is a binding site for ATP.

This sequence belongs to the Ycf2 family.

Its subcellular location is the plastid. The protein resides in the chloroplast stroma. Probable ATPase of unknown function. Its presence in a non-photosynthetic plant (Epifagus virginiana) and experiments in tobacco indicate that it has an essential function which is probably not related to photosynthesis. This chain is Protein Ycf2, found in Calycanthus floridus var. glaucus (Eastern sweetshrub).